Here is a 552-residue protein sequence, read N- to C-terminus: Membrane protein insertase YidC (552 aa).

A helical transmembrane segment spans residues 3–23; that stretch reads IKRTVLWVIFFMSAVMLFDNW. Residues 36–59 are disordered; it reads SATPTRTVGSAAPGTTTPGTQPAD. A compositionally biased stretch (low complexity) spans 42–59; that stretch reads TVGSAAPGTTTPGTQPAD. The next 3 membrane-spanning stretches (helical) occupy residues 364–384, 430–450, and 504–524; these read WGWSIVLLTLLIKAVFFPLSA, FGGCLPVVIQIPVFISLYWVL, and MMFMPIAFSVMFFFFPAGLVL.

This sequence belongs to the OXA1/ALB3/YidC family. Type 1 subfamily. Interacts with the Sec translocase complex via SecD. Specifically interacts with transmembrane segments of nascent integral membrane proteins during membrane integration.

The protein localises to the cell inner membrane. Functionally, required for the insertion and/or proper folding and/or complex formation of integral membrane proteins into the membrane. Involved in integration of membrane proteins that insert both dependently and independently of the Sec translocase complex, as well as at least some lipoproteins. Aids folding of multispanning membrane proteins. This Paraburkholderia xenovorans (strain LB400) protein is Membrane protein insertase YidC.